We begin with the raw amino-acid sequence, 185 residues long: Elongation factor P (185 aa).

The protein belongs to the elongation factor P family.

The protein resides in the cytoplasm. Its pathway is protein biosynthesis; polypeptide chain elongation. Its function is as follows. Involved in peptide bond synthesis. Stimulates efficient translation and peptide-bond synthesis on native or reconstituted 70S ribosomes in vitro. Probably functions indirectly by altering the affinity of the ribosome for aminoacyl-tRNA, thus increasing their reactivity as acceptors for peptidyl transferase. This chain is Elongation factor P, found in Desulforudis audaxviator (strain MP104C).